The following is a 289-amino-acid chain: Acetyl-coenzyme A carboxylase carboxyl transferase subunit beta (289 aa).

The CoA carboxyltransferase N-terminal domain maps to Met34–Phe289. 4 residues coordinate Zn(2+): Cys38, Cys41, Cys57, and Cys60. Residues Cys38 to Cys60 form a C4-type zinc finger.

The protein belongs to the AccD/PCCB family. Acetyl-CoA carboxylase is a heterohexamer composed of biotin carboxyl carrier protein (AccB), biotin carboxylase (AccC) and two subunits each of ACCase subunit alpha (AccA) and ACCase subunit beta (AccD). Requires Zn(2+) as cofactor.

Its subcellular location is the cytoplasm. The enzyme catalyses N(6)-carboxybiotinyl-L-lysyl-[protein] + acetyl-CoA = N(6)-biotinyl-L-lysyl-[protein] + malonyl-CoA. It participates in lipid metabolism; malonyl-CoA biosynthesis; malonyl-CoA from acetyl-CoA: step 1/1. In terms of biological role, component of the acetyl coenzyme A carboxylase (ACC) complex. Biotin carboxylase (BC) catalyzes the carboxylation of biotin on its carrier protein (BCCP) and then the CO(2) group is transferred by the transcarboxylase to acetyl-CoA to form malonyl-CoA. The chain is Acetyl-coenzyme A carboxylase carboxyl transferase subunit beta from Clostridium botulinum (strain Langeland / NCTC 10281 / Type F).